The chain runs to 424 residues: Tol-Pal system protein TolB (424 aa).

Residues 1 to 24 form the signal peptide; the sequence is MNKARAIARWISFLLLIAAGQVCA.

This sequence belongs to the TolB family. In terms of assembly, the Tol-Pal system is composed of five core proteins: the inner membrane proteins TolA, TolQ and TolR, the periplasmic protein TolB and the outer membrane protein Pal. They form a network linking the inner and outer membranes and the peptidoglycan layer.

The protein resides in the periplasm. Part of the Tol-Pal system, which plays a role in outer membrane invagination during cell division and is important for maintaining outer membrane integrity. The chain is Tol-Pal system protein TolB from Methylococcus capsulatus (strain ATCC 33009 / NCIMB 11132 / Bath).